A 461-amino-acid chain; its full sequence is TWiK family of potassium channels protein 18 (461 aa).

The Cytoplasmic segment spans residues 1 to 21; that stretch reads MAIVAQGVSTILTTFQKTFKG. Residues 22–42 traverse the membrane as a helical segment; it reads LLPLIILVAYTLLGAWIFWMI. An N-linked (GlcNAc...) asparagine glycan is attached at asparagine 88. The segment at residues 116–136 is an intramembrane region (pore-forming); sequence FLGSIFYCMTVYTTIGYGNIV. The chain crosses the membrane as a helical span at residues 144 to 164; it reads FATILYAFIGIPLTVLSLYCL. The Cytoplasmic portion of the chain corresponds to 165-224; sequence GSLFAKGCKMLWRFFLKSTRVVSKDLSNKISEAADNIEEGTTAITPSAEKTENNDDDLLS. The chain crosses the membrane as a helical span at residues 225–245; that stretch reads FPISGLLLITVIWVIFCAVLF. Residues 253-273 constitute an intramembrane region (pore-forming); that stretch reads FGTSLYFTLISFTTIGFGDIL. The helical transmembrane segment at 281–301 threads the bilayer; the sequence is PIVGVLLLIGLSLVSTVMTLI. The Cytoplasmic segment spans residues 302–461; sequence QQQIEALASG…GNEDYLEHDI (160 aa). The tract at residues 328–347 is disordered; sequence REDGEVDEHVDPEEDPENNK.

This sequence belongs to the two pore domain potassium channel (TC 1.A.1.8) family. In terms of tissue distribution, expressed in body wall muscle.

It localises to the membrane. Its function is as follows. Outwardly rectifying potassium channel protein; activity is sharply augmented by increase in temperature. The chain is TWiK family of potassium channels protein 18 (twk-18) from Caenorhabditis elegans.